A 303-amino-acid polypeptide reads, in one-letter code: MRGLGLTLAAACAAWLAWWAWPDGAHSEAAAARQAARGGFAPSLIGTRPDGAAAEADGKLVVDQQLRQLFDYYLATLGERDLAVIRTELQGQLKRSLKNGPLAQAMGLFDRYVGYKRSLAGKAAAAATDLSHRLELVQAARRQYFSQAELDGLFGDEDRYDNFTARRLAIEANPALSVDEKRRRVAQLEQQLPPGLRAAREEPVKHLALADAEARLRQGGGGEQQLYQLRAGMVGQAAADRLGELDREQAAWQNRVDDFKRERTAILADGGLSAQQRQQALARLQAQRFSQQESLRLPAYLSN.

The chain crosses the membrane as a helical span at residues 7-23 (TLAAACAAWLAWWAWPD).

The protein belongs to the lipase chaperone family.

The protein localises to the cell inner membrane. Its function is as follows. May be involved in the folding of the extracellular lipase during its passage through the periplasm. The protein is Lipase chaperone (lifO) of Chromobacterium violaceum (strain ATCC 12472 / DSM 30191 / JCM 1249 / CCUG 213 / NBRC 12614 / NCIMB 9131 / NCTC 9757 / MK).